A 308-amino-acid chain; its full sequence is UDP-N-acetylenolpyruvoylglucosamine reductase (308 aa).

The 165-residue stretch at 33–197 (TGGNADFYLS…LEASFNLAPG (165 aa)) folds into the FAD-binding PCMH-type domain. Arg-176 is a catalytic residue. The active-site Proton donor is the Ser-226. The active site involves Glu-296.

The protein belongs to the MurB family. FAD is required as a cofactor.

It is found in the cytoplasm. It catalyses the reaction UDP-N-acetyl-alpha-D-muramate + NADP(+) = UDP-N-acetyl-3-O-(1-carboxyvinyl)-alpha-D-glucosamine + NADPH + H(+). It functions in the pathway cell wall biogenesis; peptidoglycan biosynthesis. In terms of biological role, cell wall formation. The sequence is that of UDP-N-acetylenolpyruvoylglucosamine reductase from Staphylococcus carnosus (strain TM300).